Reading from the N-terminus, the 452-residue chain is Phosphoglucosamine mutase (452 aa).

Ser-97 functions as the Phosphoserine intermediate in the catalytic mechanism. Mg(2+) is bound by residues Ser-97, Asp-236, Asp-238, and Asp-240. The residue at position 97 (Ser-97) is a Phosphoserine.

It belongs to the phosphohexose mutase family. Requires Mg(2+) as cofactor. Activated by phosphorylation.

The catalysed reaction is alpha-D-glucosamine 1-phosphate = D-glucosamine 6-phosphate. Its function is as follows. Catalyzes the conversion of glucosamine-6-phosphate to glucosamine-1-phosphate. The polypeptide is Phosphoglucosamine mutase (Prochlorococcus marinus subsp. pastoris (strain CCMP1986 / NIES-2087 / MED4)).